The primary structure comprises 134 residues: uncharacterized protein (134 aa).

It localises to the cell membrane. Functionally, may have a role in the regulation of NDH-1 biosynthesis. This is an uncharacterized protein from Paracoccus denitrificans.